We begin with the raw amino-acid sequence, 657 residues long: Major core protein 4b (657 aa).

Residues 1–61 constitute a propeptide that is removed on maturation; it reads MESDSNIAIE…ITEEDVISAG (61 aa).

This sequence belongs to the poxviridae protein P4b family. The precursor is cleaved to a mature protein during virion maturation. Proteolytic cleavage of major core proteins P4a (A10L), P4b (A3L), and VP8 (L4R), which occurs at a late stage of core formation, is required for production of infectious mature virions (MV).

The protein localises to the virion. Its function is as follows. Major component of the virion core that undergoes proteolytic processing during the immature virion (IV) to mature virion (MV) transition. Essential for the formation of a structurally normal core. The chain is Major core protein 4b from Vertebrata (FPV).